The chain runs to 365 residues: Phosphoserine aminotransferase (365 aa).

Arginine 40 lines the L-glutamate pocket. Residues 74–75 (AS), phenylalanine 99, threonine 155, aspartate 177, and glutamine 200 contribute to the pyridoxal 5'-phosphate site. At lysine 201 the chain carries N6-(pyridoxal phosphate)lysine. A pyridoxal 5'-phosphate-binding site is contributed by 241-242 (NT).

The protein belongs to the class-V pyridoxal-phosphate-dependent aminotransferase family. SerC subfamily. As to quaternary structure, homodimer. Pyridoxal 5'-phosphate is required as a cofactor.

The protein localises to the cytoplasm. It catalyses the reaction O-phospho-L-serine + 2-oxoglutarate = 3-phosphooxypyruvate + L-glutamate. The enzyme catalyses 4-(phosphooxy)-L-threonine + 2-oxoglutarate = (R)-3-hydroxy-2-oxo-4-phosphooxybutanoate + L-glutamate. It participates in amino-acid biosynthesis; L-serine biosynthesis; L-serine from 3-phospho-D-glycerate: step 2/3. In terms of biological role, catalyzes the reversible conversion of 3-phosphohydroxypyruvate to phosphoserine and of 3-hydroxy-2-oxo-4-phosphonooxybutanoate to phosphohydroxythreonine. The polypeptide is Phosphoserine aminotransferase (Lactococcus lactis subsp. cremoris (strain MG1363)).